A 300-amino-acid polypeptide reads, in one-letter code: Spermine synthase SPE4 (300 aa).

Serine 5 carries the post-translational modification Phosphoserine. In terms of domain architecture, PABS spans 12–255 (DGWFREINDK…GQLGLIVCSN (244 aa)). Residues glutamine 44, aspartate 99, glutamate 119, and 151–152 (DG) contribute to the S-adenosyl 3-(methylsulfanyl)propylamine site. Aspartate 174 (proton acceptor) is an active-site residue. Aspartate 177 contacts spermidine.

The protein belongs to the spermidine/spermine synthase family.

The enzyme catalyses S-adenosyl 3-(methylsulfanyl)propylamine + spermidine = spermine + S-methyl-5'-thioadenosine + H(+). It functions in the pathway amine and polyamine biosynthesis; spermine biosynthesis; spermine from spermidine: step 1/1. This Saccharomyces cerevisiae (strain ATCC 204508 / S288c) (Baker's yeast) protein is Spermine synthase SPE4 (SPE4).